Reading from the N-terminus, the 409-residue chain is G2/mitotic-specific cyclin-B (409 aa).

The protein belongs to the cyclin family. Cyclin AB subfamily. As to quaternary structure, interacts with the CDK1 protein kinase to form a serine/threonine kinase holoenzyme complex also known as maturation promoting factor (MPF). The cyclin subunit imparts substrate specificity to the complex.

Its function is as follows. Essential for the control of the cell cycle at the G2/M (mitosis) transition. This chain is G2/mitotic-specific cyclin-B, found in Arbacia punctulata (Punctuate sea urchin).